The chain runs to 578 residues: SUMOylated effector protein AmpA (578 aa).

A disordered region spans residues 144–169; it reads PQTVDPSVVESATGSGVDTQEEQEID. Tandem repeats lie at residues 180–272, 304–425, and 428–557. The interval 180–557 is 3 X approximate tandem repeats; the sequence is TEEQEVILEE…VEADAGMQQE (378 aa). Residues 516-578 are disordered; that stretch reads VSVEADAGMQ…DPDDEDVLSY (63 aa).

In terms of processing, polysumoylated during infection on at least two lysine residues, in the N- and C-terminal section. SUMO2/3 modification of AmpA throughout the infection cycle is likely critical for bacterial intracellular survival, while terminal SUMO1 conjugation of AmpA may promote a late-stage infection cycle event. Only a small portion of the available AmpA pool is actually SUMOylated at any given time.

The protein resides in the secreted. The protein localises to the host membrane. It localises to the host cytoplasm. Its subcellular location is the host cytosol. Functionally, secreted effector that hijacks host cell SUMOylation during A.phagocytophilum infection and is important for the pathogen's intracellular survival. The protein is SUMOylated effector protein AmpA of Anaplasma phagocytophilum (strain HZ).